The primary structure comprises 300 residues: UPF0761 membrane protein Patl_3954 (300 aa).

The next 6 helical transmembrane spans lie at 46–66 (LLSL…FPAF), 103–123 (MGAI…SNID), 138–158 (IIFT…LIGL), 184–204 (MLKI…YMIV), 214–234 (ALVG…GFSF), and 248–268 (AMAV…VVLL).

It belongs to the UPF0761 family.

The protein resides in the cell inner membrane. This Pseudoalteromonas atlantica (strain T6c / ATCC BAA-1087) protein is UPF0761 membrane protein Patl_3954.